Here is a 359-residue protein sequence, read N- to C-terminus: DNA integrity scanning protein DisA (359 aa).

The 140-residue stretch at 7–146 (DDIFRATLAA…GRRYVLDGSA (140 aa)) folds into the DAC domain. Residues glycine 74, leucine 92, and 105–109 (TRHRT) contribute to the ATP site.

It belongs to the DisA family. As to quaternary structure, homooctamer. The cofactor is Mg(2+).

It carries out the reaction 2 ATP = 3',3'-c-di-AMP + 2 diphosphate. Functionally, participates in a DNA-damage check-point that is active prior to asymmetric division when DNA is damaged. DisA forms globular foci that rapidly scan along the chromosomes during sporulation, searching for lesions. When a lesion is present, DisA pauses at the lesion site. This triggers a cellular response that culminates in a temporary block in sporulation initiation. Also has diadenylate cyclase activity, catalyzing the condensation of 2 ATP molecules into cyclic di-AMP (c-di-AMP). c-di-AMP acts as a signaling molecule that couples DNA integrity with progression of sporulation. The rise in c-di-AMP level generated by DisA while scanning the chromosome, operates as a positive signal that advances sporulation; upon encountering a lesion, the DisA focus arrests at the damaged site and halts c-di-AMP synthesis. This chain is DNA integrity scanning protein DisA, found in Frankia alni (strain DSM 45986 / CECT 9034 / ACN14a).